Here is a 173-residue protein sequence, read N- to C-terminus: Alpha-crystallin A chain (173 aa).

N-acetylmethionine is present on Met-1. A required for complex formation with BFSP1 and BFSP2 region spans residues 1–63; it reads MDVTIQHPWF…RTVLDSGISE (63 aa). Position 6 is a deamidated glutamine; partial (Gln-6). Ser-45 is modified (phosphoserine). A Deamidated glutamine; partial modification is found at Gln-50. The sHSP domain maps to 52 to 162; that stretch reads LFRTVLDSGI…GHSERAIPVS (111 aa). Lys-99 carries the N6-acetyllysine modification. His-100 is a binding site for Zn(2+). At Asn-101 the chain carries Deamidated asparagine; partial. The Zn(2+) site is built by Glu-102 and His-107. Ser-122 bears the Phosphoserine mark. Asn-123 is modified (deamidated asparagine; partial). A disulfide bond links Cys-131 and Cys-142. The disordered stretch occupies residues 146-173; that stretch reads VQSSMDDGHSERAIPVSREEKPSSVPSS. Gln-147 bears the Deamidated glutamine; partial mark. Over residues 151 to 167 the composition is skewed to basic and acidic residues; the sequence is DDGHSERAIPVSREEKP. His-154 contacts Zn(2+). O-linked (GlcNAc) serine glycosylation occurs at Ser-162.

This sequence belongs to the small heat shock protein (HSP20) family. As to quaternary structure, heteromer composed of three CRYAA and one CRYAB subunits. Inter-subunit bridging via zinc ions enhances stability, which is crucial as there is no protein turn over in the lens. Can also form homodimers and homotetramers (dimers of dimers) which serve as the building blocks of homooligomers. Within homooligomers, the zinc-binding motif is created from residues of 3 different molecules. His-100 and Glu-102 from one molecule are ligands of the zinc ion, and His-107 and His-154 residues from additional molecules complete the site with tetrahedral coordination geometry. Part of a complex required for lens intermediate filament formation composed of BFSP1, BFSP2 and CRYAA. Undergoes age-dependent proteolytical cleavage at the C-terminus.

It localises to the cytoplasm. The protein resides in the nucleus. Functionally, contributes to the transparency and refractive index of the lens. In its oxidized form (absence of intramolecular disulfide bond), acts as a chaperone, preventing aggregation of various proteins under a wide range of stress conditions. Required for the correct formation of lens intermediate filaments as part of a complex composed of BFSP1, BFSP2 and CRYAA. This is Alpha-crystallin A chain (CRYAA) from Orycteropus afer (Aardvark).